Reading from the N-terminus, the 88-residue chain is Exodeoxyribonuclease 7 small subunit (88 aa).

Residues 69-88 form a disordered region; sequence DPMHPDDGEPFDPSLVSTSQ.

It belongs to the XseB family. In terms of assembly, heterooligomer composed of large and small subunits.

The protein localises to the cytoplasm. It catalyses the reaction Exonucleolytic cleavage in either 5'- to 3'- or 3'- to 5'-direction to yield nucleoside 5'-phosphates.. In terms of biological role, bidirectionally degrades single-stranded DNA into large acid-insoluble oligonucleotides, which are then degraded further into small acid-soluble oligonucleotides. The polypeptide is Exodeoxyribonuclease 7 small subunit (Xylella fastidiosa (strain M23)).